We begin with the raw amino-acid sequence, 1701 residues long: Coiled-coil domain-containing protein 180 (1701 aa).

Positions 1–35 (MRGGENRPPARVQSSSEELELRHQSLDAFPGRRLP) are disordered. Residues 171 to 198 (QRQAEHKRKSYESALASFQEEIAQVGKE) adopt a coiled-coil conformation. Disordered stretches follow at residues 657-808 (EKPS…DKEE), 1272-1291 (HHCDKDPSQTGRGAWACGSR), and 1319-1354 (GFKRHRCQPENSGKKAVPSASATSAGSFTPHPKPNK). Basic residues predominate over residues 661 to 671 (QKRVKKLRKKQ). The span at 672–682 (GSKEDMTRSEE) shows a compositional bias: basic and acidic residues. Positions 683 to 692 (SISSGTSTAR) are enriched in polar residues. Residues 696–705 (EVEEENDQEM) are compositionally biased toward acidic residues. Residues 755 to 766 (ENVKGQGEKKEE) are compositionally biased toward basic and acidic residues. A coiled-coil region spans residues 757 to 804 (VKGQGEKKEESEEEDEKEEEEEEEKLEEEKEEKEAQEEQESLSVGEEE). Acidic residues predominate over residues 767–808 (SEEEDEKEEEEEEEKLEEEKEEKEAQEEQESLSVGEEEDKEE).

In Homo sapiens (Human), this protein is Coiled-coil domain-containing protein 180 (CCDC180).